Consider the following 166-residue polypeptide: NAD(P)H-quinone oxidoreductase subunit I, chloroplastic (166 aa).

2 4Fe-4S ferredoxin-type domains span residues 55–84 (GRIHFEFDKCIACEVCVRVCPIDLPVVDWK) and 95–124 (LNYSIDFGICIFCGNCVEYCPTNCLSMTEE). Residues Cys-64, Cys-67, Cys-70, Cys-74, Cys-104, Cys-107, Cys-110, and Cys-114 each contribute to the [4Fe-4S] cluster site.

The protein belongs to the complex I 23 kDa subunit family. As to quaternary structure, NDH is composed of at least 16 different subunits, 5 of which are encoded in the nucleus. [4Fe-4S] cluster serves as cofactor.

It is found in the plastid. The protein resides in the chloroplast thylakoid membrane. The enzyme catalyses a plastoquinone + NADH + (n+1) H(+)(in) = a plastoquinol + NAD(+) + n H(+)(out). It catalyses the reaction a plastoquinone + NADPH + (n+1) H(+)(in) = a plastoquinol + NADP(+) + n H(+)(out). NDH shuttles electrons from NAD(P)H:plastoquinone, via FMN and iron-sulfur (Fe-S) centers, to quinones in the photosynthetic chain and possibly in a chloroplast respiratory chain. The immediate electron acceptor for the enzyme in this species is believed to be plastoquinone. Couples the redox reaction to proton translocation, and thus conserves the redox energy in a proton gradient. The sequence is that of NAD(P)H-quinone oxidoreductase subunit I, chloroplastic from Melampodium leucanthum (Black foot daisy).